The sequence spans 103 residues: Putative sulfurtransferase YtwF (103 aa).

The 84-residue stretch at 17-100 (ADEELYLIDV…GMMAWEGETK (84 aa)) folds into the Rhodanese domain. The active-site Cysteine persulfide intermediate is Cys65.

In Bacillus subtilis (strain 168), this protein is Putative sulfurtransferase YtwF (ytwF).